Reading from the N-terminus, the 168-residue chain is Protein DESIGUAL 2 (168 aa).

An N-terminal signal peptide occupies residues 1 to 20 (MARNVGFFICILILAMDVSA). Transmembrane regions (helical) follow at residues 56–76 (LAAC…GGCL), 94–114 (AVAS…MLIV), and 133–153 (VLSI…AYYI).

This sequence belongs to the DESIGUAL family. In terms of tissue distribution, mainly expressed in roots, inflorescences and developing leaves, and, at low levels, in mature leaves.

It localises to the endoplasmic reticulum membrane. Involved, partially redundantly with VCC/DEAL1 and DEAL3, to ensure bilateral symmetry development and early leaf margin patterning, probably via the regulation of auxin and CUC2 distribution. In Arabidopsis thaliana (Mouse-ear cress), this protein is Protein DESIGUAL 2.